Consider the following 45-residue polypeptide: Putative potassium channel blocker (45 aa).

Expressed by the venom gland.

Its subcellular location is the secreted. Functionally, inhibits potassium channels. The polypeptide is Putative potassium channel blocker (Hottentotta tamulus (Eastern Indian scorpion)).